A 429-amino-acid polypeptide reads, in one-letter code: Stromal membrane-associated protein 2 (429 aa).

Residues 13 to 137 (QAVLANLLLE…LDINAFRKEK (125 aa)) enclose the Arf-GAP domain. The segment at 28 to 51 (CADCQSKGPRWASWNIGVFICIRC) adopts a C4-type zinc-finger fold. Ser-127 bears the Phosphoserine mark. A compositionally biased stretch (basic and acidic residues) spans 138–172 (DNKWKRGSEPAPEKKMEPVVFEKVKMPQKKEDPQL). Disordered regions lie at residues 138-181 (DNKW…PKSK) and 217-263 (VSSP…KKQL). The interval 163–232 (MPQKKEDPQL…SVSRKVVGSM (70 aa)) is interaction with clathrin heavy chains. Residues 217-231 (VSSPSSSVSRKVVGS) are compositionally biased toward low complexity. Residues Ser-219, Ser-223, Ser-225, Ser-231, and Ser-240 each carry the phosphoserine modification. Positions 253 to 263 (SKSEETSKKQL) are enriched in basic and acidic residues. The segment at 340–429 (MGGMQASMMG…NQTLSPQMWK (90 aa)) is interaction with PICALM.

As to quaternary structure, interacts with ARF1. Interacts with PICALM and clathrin heavy chains.

The protein resides in the cytoplasm. Its function is as follows. GTPase activating protein that acts on ARF1. Can also activate ARF6 (in vitro). May play a role in clathrin-dependent retrograde transport from early endosomes to the trans-Golgi network. This is Stromal membrane-associated protein 2 (SMAP2) from Bos taurus (Bovine).